A 121-amino-acid chain; its full sequence is Prefoldin subunit beta (121 aa).

Belongs to the prefoldin subunit beta family. Heterohexamer of two alpha and four beta subunits.

It localises to the cytoplasm. Its function is as follows. Molecular chaperone capable of stabilizing a range of proteins. Seems to fulfill an ATP-independent, HSP70-like function in archaeal de novo protein folding. The chain is Prefoldin subunit beta (pfdB) from Methanothermobacter thermautotrophicus (strain ATCC 29096 / DSM 1053 / JCM 10044 / NBRC 100330 / Delta H) (Methanobacterium thermoautotrophicum).